Consider the following 168-residue polypeptide: Protein OPG162 (168 aa).

Over 1–14 (MKSLNRQTVSRFKK) the chain is Intravirion. Residues 15 to 37 (LSVPAAIMMILSTIISGIGTFLH) traverse the membrane as a helical segment. The Virion surface segment spans residues 38 to 168 (YKEELMPSAC…SVLCVKRFYK (131 aa)). One can recognise a C-type lectin domain in the interval 54–163 (YDKHCYLDTN…CKSTQSVLCV (110 aa)). Cystine bridges form between C75–C162 and C141–C154. The N-linked (GlcNAc...) asparagine; by host glycan is linked to N133.

It belongs to the orthopoxvirus OPG162 protein family. As to quaternary structure, interacts with protein OPG161. Interacts with protein OPG164. Interacts with protein OPG190.

The protein localises to the virion membrane. It localises to the host Golgi apparatus. Forms a complex with OPG162 and OPG190 to coordinate the incorporation of OPG164 into wrapped enveloped virion (EV) membranes and, subsequently, the production of actin tails. Therefore plays an essential role in efficient cell-to-cell spread of viral particles. The polypeptide is Protein OPG162 (OPG162) (Variola virus (isolate Human/India/Ind3/1967) (VARV)).